The sequence spans 122 residues: Large ribosomal subunit protein bL12 (122 aa).

The protein belongs to the bacterial ribosomal protein bL12 family. Homodimer. Part of the ribosomal stalk of the 50S ribosomal subunit. Forms a multimeric L10(L12)X complex, where L10 forms an elongated spine to which 2 to 4 L12 dimers bind in a sequential fashion. Binds GTP-bound translation factors.

Its function is as follows. Forms part of the ribosomal stalk which helps the ribosome interact with GTP-bound translation factors. Is thus essential for accurate translation. The protein is Large ribosomal subunit protein bL12 of Neisseria lactamica.